A 111-amino-acid chain; its full sequence is Viscotoxin-A3 (111 aa).

Residues 1 to 26 (MEVVRGSSLVLLVLLLGALLVSQVES) form the signal peptide. Cystine bridges form between cysteine 29–cysteine 66, cysteine 30–cysteine 58, and cysteine 42–cysteine 52. Residues 73–111 (FYCTLGCESSQCATNSNGDAEAVRCKTACSDLCQDVDDA) constitute a propeptide, acidic domain.

The protein belongs to the plant thionin (TC 1.C.44) family.

It localises to the secreted. In terms of biological role, thionins are small plant proteins which are toxic to animal cells. They seem to exert their toxic effect at the level of the cell membrane. Their precise function is not known. The chain is Viscotoxin-A3 (THI2.1) from Viscum album (European mistletoe).